A 715-amino-acid polypeptide reads, in one-letter code: Probable ubiquitin thioesterase DG1039 (715 aa).

A coiled-coil region spans residues 86–302 (KSRNEIKRKA…NNQTDDKLDN (217 aa)). The span at 287–302 (NKKLENNNQTDDKLDN) shows a compositional bias: basic and acidic residues. Disordered regions lie at residues 287 to 367 (NKKL…YNST), 398 to 450 (QYKQ…QQQY), and 502 to 527 (LAQS…SSEA). The segment covering 339–349 (TTAQLPLSITQ) has biased composition (polar residues). Residues 398-409 (QYKQQQQQQPIQ) show a composition bias toward low complexity. Polar residues-rich tracts occupy residues 410-427 (SPTN…NNYN) and 502-525 (LAQS…IDSS). Residues 537–666 (IIVHGEVFQE…IFRLTDPPGL (130 aa)) form the MPN domain. Residues His-615, His-617, Asp-628, His-630, Cys-672, His-678, and His-680 each contribute to the Zn(2+) site. Residues 615 to 628 (HTHPTQDCFLSAVD) carry the JAMM motif motif.

This sequence belongs to the peptidase M67C family. The cofactor is Zn(2+).

May be a zinc metalloprotease that specifically cleaves ubiquitin chains. The protein is Probable ubiquitin thioesterase DG1039 (DG1039) of Dictyostelium discoideum (Social amoeba).